We begin with the raw amino-acid sequence, 928 residues long: Mitogen-activated protein kinase kinase kinase dlk-1 (928 aa).

The disordered stretch occupies residues 1-72 (MTSTTMVTTL…GQKEGSPDPK (72 aa)). The span at 42 to 52 (LVTQSAPNTPI) shows a compositional bias: polar residues. The span at 53 to 69 (QHREQANAEFGQKEGSP) shows a compositional bias: basic and acidic residues. One can recognise a Protein kinase domain in the interval 135 to 377 (ISELEWLGSG…FSHIRQHWEI (243 aa)). Residues 141 to 149 (LGSGSQGAV) and K162 contribute to the ATP site. D246 serves as the catalytic Proton acceptor. The interval 459–480 (LQGCFTELKLKESELAEWEKDL) is leucine-zipper. 3 disordered regions span residues 483 to 575 (REQW…DAIR), 644 to 696 (RRVS…PSRN), and 802 to 845 (ENAN…SMES). Over residues 509 to 519 (GYDDMSSDEDV) the composition is skewed to acidic residues. A compositionally biased stretch (low complexity) spans 530–557 (SNTSSSSGVQSSPFSRQSSSRSSAGQQT). An important for interaction between isoform a and isoform c region spans residues 605 to 814 (SAGAGSCTAI…NDVDLTSSMD (210 aa)). Positions 647–656 (STSVNKSTAV) are enriched in polar residues. The segment covering 677–695 (SCSSPRSSSKLNRSSYPSR) has biased composition (low complexity). The segment covering 823–833 (ADVESSEEDEG) has biased composition (acidic residues). A phosphoserine mark is found at S874 and S878. An SDGLSD hexapeptide motif is present at residues 874-879 (SDGLSD).

It belongs to the protein kinase superfamily. STE Ser/Thr protein kinase family. MAP kinase kinase kinase subfamily. Homooligomer (via leucine zipper domain and hexapeptide motif). Isoform a (via leucine zipper domain) forms a heterooligomer with isoform c (via leucine zipper domain). Isoform c does not self-associate. It depends on Mg(2+) as a cofactor. Ubiquitinated by rpm-1. Negatively regulated by ubiquitination by fsn-1 bound rpm-1, followed by degradation. Post-translationally, phosphorylation at Ser-874 and/or at Ser-878 abolishes interaction with isoform c and promotes binding to isoform a kinase domain (likely in trans) resulting in isoform a self-association and activation. As to expression, expressed in nerve ring, nerve cord, neurons, and pharynx.

The protein localises to the synapse. It is found in the cytoplasm. Its subcellular location is the cell projection. The protein resides in the axon. It localises to the dendrite. The protein localises to the cilium. It carries out the reaction L-seryl-[protein] + ATP = O-phospho-L-seryl-[protein] + ADP + H(+). It catalyses the reaction L-threonyl-[protein] + ATP = O-phospho-L-threonyl-[protein] + ADP + H(+). Inactive when associated with isoform c. Dissociation from isoform c, which is dependent on the phosphorylation of the C-terminal hexapeptide, results in self-association and activation. Transient increase in Ca(2+) levels caused by axonal injury or synaptic activity triggers the dissociation of isoform a from isoform c; the dissociation may be influenced by the phosphorylation status of the C-terminal hexapeptide. In terms of biological role, component of a MAP kinase pathway that functions presynaptically to regulate synaptic architecture and presynaptic differentiation. Phosphorylates and activates mkk-4. Has a role in axonal regrowth following injury and synaptogenesis. Plays a role in modulating polymerization of neuronal microtubules. Also promotes tubulin post-translational modifications that protect microtubules. Plays a role in cilium length regulation, possibly by reducing rab-5 mediated endocytosis, and may also have a role in intraflagellar transport in cilia. Plays a role in the formation of muscle connections, also called muscle arm extensions, between the body wall and the motor axons in the dorsal and ventral cord. Its function is as follows. Has a role in synapse and axon development, and in axonal regrowth following injury. By forming heterooligomers with isoform a, acts as an inhibitor of isoform a activation. Its inhibitory function is independent of its catalytic activity. This chain is Mitogen-activated protein kinase kinase kinase dlk-1 (dlk-1), found in Caenorhabditis elegans.